We begin with the raw amino-acid sequence, 458 residues long: Serine protease HTRA2, mitochondrial (458 aa).

The transit peptide at 1–31 (MAALRAGRGAGWSLRGWRALWGGRWGKGPLL) directs the protein to the mitochondrion. Positions 32–133 (TPDLRALLTS…GGRGPPAVLA (102 aa)) are excised as a propeptide. Residues 105–125 (VWLAVALGAGGAVLLLFWGGG) traverse the membrane as a helical segment. An IAP-binding motif motif is present at residues 134-137 (SVLG). The tract at residues 166–342 (ILGRHPFSGR…IPSDRLREFL (177 aa)) is serine protease. Active-site charge relay system residues include H198, D228, and S306. Positions 364–445 (VMMLTLTPSI…QLAVRIRRGQ (82 aa)) constitute a PDZ domain.

It belongs to the peptidase S1C family. As to quaternary structure, homotrimer. Interacts with MXI2. Interacts with THAP5 under apoptotic conditions. The mature protein, but not the precursor, binds to BIRC2/c-IAP1, BIRC3/c-IAP2 and XIAP/BIRC4. Interacts with BIRC6/bruce. Interacts with AREL1 (via HECT domain); in the cytoplasm following induction of apoptosis. In terms of processing, ubiquitinated by BIRC6; this activity is inhibited by DIABLO/SMAC. Post-translationally, autoproteolytically activated.

Its subcellular location is the mitochondrion intermembrane space. It localises to the mitochondrion membrane. It catalyses the reaction Cleavage of non-polar aliphatic amino-acids at the P1 position, with a preference for Val, Ile and Met. At the P2 and P3 positions, Arg is selected most strongly with a secondary preference for other hydrophilic residues.. Inhibited by BIRC6. In terms of biological role, serine protease that shows proteolytic activity against a non-specific substrate beta-casein. Promotes apoptosis by either relieving the inhibition of BIRC proteins on caspases, leading to an increase in caspase activity; or by a BIRC inhibition-independent, caspase-independent and serine protease activity-dependent mechanism. Cleaves BIRC6 and relieves its inhibition on CASP3, CASP7 and CASP9, but it is also prone to inhibition by BIRC6. Cleaves THAP5 and promotes its degradation during apoptosis. This is Serine protease HTRA2, mitochondrial (HTRA2) from Bos taurus (Bovine).